A 187-amino-acid chain; its full sequence is dCTP deaminase, dUMP-forming (187 aa).

DCTP contacts are provided by residues 101–106 (KSSLGR) and Asp119. Glu129 acts as the Proton donor/acceptor in catalysis. Gln148, Tyr162, and Gln174 together coordinate dCTP.

It belongs to the dCTP deaminase family. Homotrimer.

It carries out the reaction dCTP + 2 H2O = dUMP + NH4(+) + diphosphate. Its pathway is pyrimidine metabolism; dUMP biosynthesis; dUMP from dCTP: step 1/1. In terms of biological role, bifunctional enzyme that catalyzes both the deamination of dCTP to dUTP and the hydrolysis of dUTP to dUMP without releasing the toxic dUTP intermediate. The polypeptide is dCTP deaminase, dUMP-forming (Corynebacterium kroppenstedtii (strain DSM 44385 / JCM 11950 / CIP 105744 / CCUG 35717)).